We begin with the raw amino-acid sequence, 101 residues long: Chaperone modulatory protein CbpM (101 aa).

The protein belongs to the CbpM family.

Functionally, interacts with CbpA and inhibits both the DnaJ-like co-chaperone activity and the DNA binding activity of CbpA. Together with CbpA, modulates the activity of the DnaK chaperone system. Does not inhibit the co-chaperone activity of DnaJ. In Pseudomonas putida (strain ATCC 700007 / DSM 6899 / JCM 31910 / BCRC 17059 / LMG 24140 / F1), this protein is Chaperone modulatory protein CbpM.